Consider the following 588-residue polypeptide: Arginine--tRNA ligase (588 aa).

The short motif at 129–139 (PNIAKEMHVGH) is the 'HIGH' region element.

Belongs to the class-I aminoacyl-tRNA synthetase family. Monomer.

Its subcellular location is the cytoplasm. The enzyme catalyses tRNA(Arg) + L-arginine + ATP = L-arginyl-tRNA(Arg) + AMP + diphosphate. The chain is Arginine--tRNA ligase from Frankia casuarinae (strain DSM 45818 / CECT 9043 / HFP020203 / CcI3).